A 508-amino-acid polypeptide reads, in one-letter code: MAP kinase kinase MKK1/SSP32 (508 aa).

3 disordered regions span residues 1–21 (MASL…PRLK), 35–95 (IYLT…LSIN), and 130–158 (ELSG…YLRN). Residues 35–47 (IYLTSNGSSTTAY) show a composition bias toward polar residues. Low complexity predominate over residues 48-66 (SSHTPEPLTSSTSTLFSQT). Composition is skewed to polar residues over residues 67–79 (RLHP…TLNT) and 131–158 (LSGN…YLRN). Residue S192 is modified to Phosphoserine. The Protein kinase domain occupies 221–488 (IETLGILGEG…PRQMINHPWI (268 aa)). Residues 227–235 (LGEGAGGSV) and K250 each bind ATP. Residue D349 is the Proton acceptor of the active site.

Belongs to the protein kinase superfamily. STE Ser/Thr protein kinase family. MAP kinase kinase subfamily.

It catalyses the reaction L-seryl-[protein] + ATP = O-phospho-L-seryl-[protein] + ADP + H(+). The catalysed reaction is L-threonyl-[protein] + ATP = O-phospho-L-threonyl-[protein] + ADP + H(+). It carries out the reaction L-tyrosyl-[protein] + ATP = O-phospho-L-tyrosyl-[protein] + ADP + H(+). Involved in a signal transduction pathway that play a role in yeast cell morphogenesis and cell growth. This pathway seems to start by SMP3; then involve the kinase PKC1 that may act on the BCK1 kinase that then phosphorylates MKK1 and MKK2 which themselves phosphorylate the MPK1 kinase. The protein is MAP kinase kinase MKK1/SSP32 (MKK1) of Saccharomyces cerevisiae (strain ATCC 204508 / S288c) (Baker's yeast).